The chain runs to 511 residues: ATP synthase subunit alpha (511 aa).

170–177 (GDRQTGKT) is a binding site for ATP.

The protein belongs to the ATPase alpha/beta chains family. F-type ATPases have 2 components, CF(1) - the catalytic core - and CF(0) - the membrane proton channel. CF(1) has five subunits: alpha(3), beta(3), gamma(1), delta(1), epsilon(1). CF(0) has three main subunits: a(1), b(2) and c(9-12). The alpha and beta chains form an alternating ring which encloses part of the gamma chain. CF(1) is attached to CF(0) by a central stalk formed by the gamma and epsilon chains, while a peripheral stalk is formed by the delta and b chains.

The protein localises to the cell inner membrane. It catalyses the reaction ATP + H2O + 4 H(+)(in) = ADP + phosphate + 5 H(+)(out). Produces ATP from ADP in the presence of a proton gradient across the membrane. The alpha chain is a regulatory subunit. This Pelagibacter ubique (strain HTCC1062) protein is ATP synthase subunit alpha.